A 140-amino-acid polypeptide reads, in one-letter code: Large ribosomal subunit protein uL11 (140 aa).

It belongs to the universal ribosomal protein uL11 family. As to quaternary structure, part of the ribosomal stalk of the 50S ribosomal subunit. Interacts with L10 and the large rRNA to form the base of the stalk. L10 forms an elongated spine to which L12 dimers bind in a sequential fashion forming a multimeric L10(L12)X complex. In terms of processing, one or more lysine residues are methylated.

In terms of biological role, forms part of the ribosomal stalk which helps the ribosome interact with GTP-bound translation factors. In Campylobacter hominis (strain ATCC BAA-381 / DSM 21671 / CCUG 45161 / LMG 19568 / NCTC 13146 / CH001A), this protein is Large ribosomal subunit protein uL11.